Consider the following 425-residue polypeptide: F-box/LRR-repeat protein At3g59250 (425 aa).

Residues 6 to 54 form the F-box domain; that stretch reads KDKISNLPEALICHILSFLPIEDSALTSVLSKRWRYLFAFRPNLVFDDS. LRR repeat units follow at residues 86 to 113, 138 to 163, 185 to 210, 264 to 293, and 294 to 319; these read DLQVNVNGVRLPSKVFVSKSLVRLRIES, MLGKGEDCFEKLTSGCHVLEELVLNN, CTESYDKNPHSVLFDTPNLVYLKYSD, CLSANSLAVLTFCCESIPVFNNLIQLTIKT, and NQSVGWESLPALLKNCPILETLVFEG.

The chain is F-box/LRR-repeat protein At3g59250 from Arabidopsis thaliana (Mouse-ear cress).